The following is a 237-amino-acid chain: Carbonyl reductase family member 4 (237 aa).

NADP(+) contacts are provided by residues 11–14 (SRGI), 34–35 (RN), Asp-57, and 84–86 (AAG). Ser-135 contacts substrate. Residues Tyr-148, Lys-152, and 181-183 (IHT) contribute to the NADP(+) site. Tyr-148 serves as the catalytic Proton acceptor.

This sequence belongs to the short-chain dehydrogenases/reductases (SDR) family. Homotetramer (in vitro). Heterotetramer with HSD17B8; contains two molecules each of HSD17B8 and CBR4.

It localises to the mitochondrion matrix. It functions in the pathway lipid metabolism; fatty acid biosynthesis. In terms of biological role, the heterotetramer with HSD17B8 has NADH-dependent 3-ketoacyl-acyl carrier protein reductase activity, and thereby plays a role in mitochondrial fatty acid biosynthesis. Within the heterotetramer, HSD17B8 binds NADH; CBR4 binds NADPD. The homotetramer has NADPH-dependent quinone reductase activity. Both homotetramer and the heterotetramer have broad in vitro substrate specificity and can reduce 9,10-phenanthrenequinone, 1,4-benzoquinone and various other o-quinones and p-quinones. This Danio rerio (Zebrafish) protein is Carbonyl reductase family member 4 (cbr4).